The chain runs to 220 residues: Iron-sulfur cluster repair protein YtfE (220 aa).

This sequence belongs to the RIC family. YtfE subfamily. Homodimer.

It is found in the cytoplasm. Functionally, di-iron-containing protein involved in the repair of iron-sulfur clusters damaged by oxidative and nitrosative stress conditions. The protein is Iron-sulfur cluster repair protein YtfE of Shigella boydii serotype 4 (strain Sb227).